A 144-amino-acid polypeptide reads, in one-letter code: Superoxide dismutase [Mn], mitochondrial (144 aa).

Residues histidine 10, histidine 58, and aspartate 143 each coordinate Mn(2+).

This sequence belongs to the iron/manganese superoxide dismutase family. As to quaternary structure, homotetramer. Mn(2+) serves as cofactor.

It is found in the mitochondrion matrix. It catalyses the reaction 2 superoxide + 2 H(+) = H2O2 + O2. Functionally, destroys superoxide anion radicals which are normally produced within the cells and which are toxic to biological systems. This chain is Superoxide dismutase [Mn], mitochondrial, found in Eptatretus stoutii (Pacific hagfish).